We begin with the raw amino-acid sequence, 125 residues long: Protein Bouncer (125 aa).

A signal peptide spans 1-18 (MGCVLLFLLLVCVPVVLP). 5 disulfides stabilise this stretch: cysteine 23/cysteine 48, cysteine 26/cysteine 35, cysteine 42/cysteine 66, cysteine 72/cysteine 91, and cysteine 92/cysteine 97. One can recognise a UPAR/Ly6 domain in the interval 23–98 (CLFCPVTSLN…FSCCGGHYCN (76 aa)). An N-linked (GlcNAc...) asparagine glycan is attached at asparagine 32. N-linked (GlcNAc...) asparagine glycosylation occurs at asparagine 84. Residue asparagine 98 is the site of GPI-anchor amidated asparagine attachment. The propeptide at 99-125 (SQPRAEPGGRLLLLLLPAAALTAAGAL) is removed in mature form.

Belongs to the SPACA4/bouncer family. In terms of assembly, interacts with spermatocyte complex composed of izumo1, spaca6 and tmem81. In terms of processing, N-glycosylated. Highly expressed in oocytes. Not expressed in testis.

Its subcellular location is the cell membrane. Its function is as follows. Oocyte-expressed fertilization factor that mediates sperm-egg binding and is essential for sperm entry into the egg. Necessary and sufficient to mediate species-specific gamete recognition and fertilization, which is essential for vertebrate species performing external fertilization. External fertilization cannot guarantee that only conspecific sperm reaches the egg by precopulatory mate choice: proteins such as Bouncer can therefore support the selection of conspecific sperm. This is Protein Bouncer from Danio rerio (Zebrafish).